Consider the following 1009-residue polypeptide: MKKKNWIYALIVTLIIIIAIVSMIFFVQTKYGDQSEKGSQSVSNKNNKIHIAIVNEDQPTTYNGKKVELGQAFIKRLANEKNYKFETVTRNVAESGLKNGGYQVMIVIPENFSKLAMQLDAKTPSKISLQYKTAVGQKEEVAKNTEKVVSNVLNDFNKNLVEIYLTSIIDNLHNAQKNVGAIMTREHGVNSKFSNYLLNPINDFPELFTDTLVNSISANKDITKWFQTYNKSLLSANSDTFRVNTDYNVSTLIEKQNSLFDEHNTAMDKMLQDYKSQKDSVELDNYINALKQMDSQIDQQSSMQDTGKEEYKQTVKENLDKLREIIQSQESPFSKGMIEDYRKQLTESLQDELANNKDLQDALNSIKMNNAQFAENLEKQLHDDIVKEPDSDTTFIYNMSKQDFIAAGLNEDEANKYEAIVKEAKRYKNEYNLKKPLAEHINLTDYDNQVAQDTSSLINDGVKVQRTETIKSNDINQLTVATDPHFNFEGDIKINGKKYDIKDQSVQLDTSNKEYKVEVNGVAKLKKDAEKDFLKDKTMHLQLLFGQANRQDEPNDKKATSVVDVTLNHNLDGRLSKDALSQQLSALSRFDAHYKMYTDTKGREDKPFDNKRLIDMMVDQVINDMESFKDDKVAVLHQIDSMEENSDKLIDDILNNKKNTTKNKEDISKLIDQLENVKKTFAEEPQEPKIDKGKNDEFNTMSSNLDKEISRISEKSTQLLSDTQESKTIADSVSGQLNQLDNNVNKLHATGRALGVRANDLNRQMAKNDKDNELFAKEFKKVLQNSKDGDRQNQALKAFMSNPVQKKNLENVLANNGNTDVISPTLFVLLMYLLSMITAYIFYSYERAKGQMNFIKDDYSSKNNLWNNAITSGVIGATGLVEGLIVGLIAMNKFHVLAGYRAKFILMVILTMMVFVLINTYLLRQVKSIGMFLMIAALGLYFVAMNNLKAAGQGVTNKISPLSYIDNMFFNYLNAEHPIGLALVILTVLVIIGFVLNMFIKHFKKERLI.

6 consecutive transmembrane segments (helical) span residues 7–27 (IYALIVTLIIIIAIVSMIFFV), 822–842 (ISPTLFVLLMYLLSMITAYIF), 869–889 (AITSGVIGATGLVEGLIVGLI), 903–923 (KFILMVILTMMVFVLINTYLL), 928–948 (SIGMFLMIAALGLYFVAMNNL), and 979–999 (IGLALVILTVLVIIGFVLNMF).

This sequence belongs to the EsaA family. In terms of assembly, homodimer. Interacts with EssB.

It is found in the cell membrane. Functionally, component of the type VII secretion system (Ess). Provides together with EssB and other components such as EssC and EssE a secretion platform across the cytoplasmic membrane in the host. The polypeptide is Type VII secretion system accessory factor EsaA (Staphylococcus aureus (strain MRSA252)).